The primary structure comprises 308 residues: Methionyl-tRNA formyltransferase (308 aa).

Residue 109–112 participates in (6S)-5,6,7,8-tetrahydrofolate binding; it reads SLLP.

The protein belongs to the Fmt family.

The catalysed reaction is L-methionyl-tRNA(fMet) + (6R)-10-formyltetrahydrofolate = N-formyl-L-methionyl-tRNA(fMet) + (6S)-5,6,7,8-tetrahydrofolate + H(+). Attaches a formyl group to the free amino group of methionyl-tRNA(fMet). The formyl group appears to play a dual role in the initiator identity of N-formylmethionyl-tRNA by promoting its recognition by IF2 and preventing the misappropriation of this tRNA by the elongation apparatus. This chain is Methionyl-tRNA formyltransferase, found in Phenylobacterium zucineum (strain HLK1).